The sequence spans 204 residues: COBRA-like protein 5 (204 aa).

A signal peptide spans 1–24; it reads MESLFSTMIVLLLVSFSCLISTEA. N-linked (GlcNAc...) asparagine glycans are attached at residues asparagine 31 and asparagine 195.

The protein belongs to the COBRA family. As to expression, expressed in roots, stems, leaves, flowers and siliques.

In Arabidopsis thaliana (Mouse-ear cress), this protein is COBRA-like protein 5 (COBL5).